The chain runs to 187 residues: Sodium/potassium ATPase inhibitor SPAI-2 (187 aa).

A signal peptide spans 1–21; it reads MRSRSFLVLVAVFLICETLVA. A Pyrrolidone carboxylic acid modification is found at glutamine 22. The propeptide occupies 22–126; the sequence is QRLDRIRGPK…NAQLPDKVQD (105 aa). The tract at residues 28–98 is disordered; that stretch reads RGPKGQGQDP…QDPVKAELPD (71 aa). Tandem repeats lie at residues 34–39, 40–45, 46–51, 58–63, 64–69, 70–75, 76–81, 82–87, 88–93, 100–105, 106–111, 112–117, 118–123, and 124–129. A 14 X 6 AA approximate tandem repeats region spans residues 34–129; the sequence is GQDPVEGQDQ…LPDKVQDPVK (96 aa). The stretch at 64 to 85 is one SVP-1 clotting 1 repeat; sequence GQDPVKGQDPVKGQDPVKGQDL. The WAP domain occupies 139–187; it reads LLSKRGHCPRILFRCPLSNPSNKCWRDYDCPGVKKCCEGFCGKDCLYPK. Intrachain disulfides connect cysteine 146-cysteine 175, cysteine 153-cysteine 179, cysteine 162-cysteine 174, and cysteine 168-cysteine 183.

Post-translationally, the short form (AA 127-187) may be an artifact due to the strongly acidic conditions of the duodenum. The pro-SPAI form may be the native form. As to expression, small intestine &gt; large intestine. The plasma contains the pro-SPAI form circulating.

Its function is as follows. Inhibits Na(+),K(+) ATPase by the competitive mode against Na(+). This Sus scrofa (Pig) protein is Sodium/potassium ATPase inhibitor SPAI-2.